The following is a 200-amino-acid chain: Coiled-coil domain-containing protein 28B (200 aa).

Residue Met1 is modified to N-acetylmethionine. The span at 1 to 10 (MDDKKKKRSP) shows a compositional bias: basic residues. A disordered region spans residues 1-49 (MDDKKKKRSPKPCLAQPAQAPGTLRRVPVPTSHSGSLALGLPHLPSPKQ). Ser46 and Ser115 each carry phosphoserine. The span at 141 to 152 (EEEDDEEEEDGV) shows a compositional bias: acidic residues. The disordered stretch occupies residues 141-164 (EEEDDEEEEDGVTEGLPEEQKKTM). Residues 158 to 183 (EEQKKTMADRNLDQLLSNLEDLSNSI) adopt a coiled-coil conformation.

In terms of assembly, interacts with BBS1, BBS2, BBS4, BBS5, BBS6, BBS7 and TTC8/BBS8. Interacts with MAPKAP1/SIN1 isoform 1 and RICTOR.

It localises to the cytoplasm. The protein resides in the cytoskeleton. It is found in the microtubule organizing center. Its subcellular location is the centrosome. Its function is as follows. Involved in ciliogenesis. Regulates cilia length through its interaction with MAPKAP1/SIN1 but independently of mTORC2 complex. Modulates mTORC2 complex assembly and function, possibly enhances AKT1 phosphorylation. Does not seem to modulate assembly and function of mTORC1 complex. In Homo sapiens (Human), this protein is Coiled-coil domain-containing protein 28B (CCDC28B).